The primary structure comprises 102 residues: NADH-quinone oxidoreductase subunit K (102 aa).

Helical transmembrane passes span 6–26 (LEHGLAVAGILFCLGLVGLMV), 30–50 (ILFVLMSLEVMMNASALAFVV), and 62–82 (VMFILVISLAAAEASIGLAIL).

Belongs to the complex I subunit 4L family. NDH-1 is composed of 13 different subunits. Subunits NuoA, H, J, K, L, M, N constitute the membrane sector of the complex.

It localises to the cell inner membrane. It carries out the reaction a quinone + NADH + 5 H(+)(in) = a quinol + NAD(+) + 4 H(+)(out). Its function is as follows. NDH-1 shuttles electrons from NADH, via FMN and iron-sulfur (Fe-S) centers, to quinones in the respiratory chain. The immediate electron acceptor for the enzyme in this species is believed to be ubiquinone. Couples the redox reaction to proton translocation (for every two electrons transferred, four hydrogen ions are translocated across the cytoplasmic membrane), and thus conserves the redox energy in a proton gradient. The polypeptide is NADH-quinone oxidoreductase subunit K (Pseudomonas putida (strain ATCC 700007 / DSM 6899 / JCM 31910 / BCRC 17059 / LMG 24140 / F1)).